The primary structure comprises 166 residues: uncharacterized protein (166 aa).

The region spanning 2–82 (DNWVCYLIMS…KRLSKKRNIQ (81 aa)) is the GIY-YIG domain. The interval 23 to 43 (NNRQRRLNDHNNLNPSRKGAK) is disordered.

This is an uncharacterized protein from Acanthamoeba polyphaga mimivirus (APMV).